Here is a 196-residue protein sequence, read N- to C-terminus: Putative NADH dehydrogenase/NAD(P)H nitroreductase PST_3601 (196 aa).

The protein belongs to the nitroreductase family. HadB/RutE subfamily. FMN serves as cofactor.

The polypeptide is Putative NADH dehydrogenase/NAD(P)H nitroreductase PST_3601 (Stutzerimonas stutzeri (strain A1501) (Pseudomonas stutzeri)).